The following is a 243-amino-acid chain: Ubiquinone biosynthesis O-methyltransferase (243 aa).

R44, G64, D85, and M129 together coordinate S-adenosyl-L-methionine.

The protein belongs to the methyltransferase superfamily. UbiG/COQ3 family.

It catalyses the reaction a 3-demethylubiquinol + S-adenosyl-L-methionine = a ubiquinol + S-adenosyl-L-homocysteine + H(+). It carries out the reaction a 3-(all-trans-polyprenyl)benzene-1,2-diol + S-adenosyl-L-methionine = a 2-methoxy-6-(all-trans-polyprenyl)phenol + S-adenosyl-L-homocysteine + H(+). Its pathway is cofactor biosynthesis; ubiquinone biosynthesis. Its function is as follows. O-methyltransferase that catalyzes the 2 O-methylation steps in the ubiquinone biosynthetic pathway. This Erwinia tasmaniensis (strain DSM 17950 / CFBP 7177 / CIP 109463 / NCPPB 4357 / Et1/99) protein is Ubiquinone biosynthesis O-methyltransferase.